The following is a 149-amino-acid chain: Deoxyuridine 5'-triphosphate nucleotidohydrolase (149 aa).

Substrate contacts are provided by residues 65–67 (RSG), asparagine 78, 82–84 (TID), and lysine 92.

This sequence belongs to the dUTPase family. It depends on Mg(2+) as a cofactor.

It carries out the reaction dUTP + H2O = dUMP + diphosphate + H(+). It participates in pyrimidine metabolism; dUMP biosynthesis; dUMP from dCTP (dUTP route): step 2/2. This enzyme is involved in nucleotide metabolism: it produces dUMP, the immediate precursor of thymidine nucleotides and it decreases the intracellular concentration of dUTP so that uracil cannot be incorporated into DNA. In Chlorobium chlorochromatii (strain CaD3), this protein is Deoxyuridine 5'-triphosphate nucleotidohydrolase.